We begin with the raw amino-acid sequence, 178 residues long: Ribosome maturation factor RimM (178 aa).

The PRC barrel domain maps to 104–177; the sequence is SDEYYFYEVI…KIVVKLPEWL (74 aa).

It belongs to the RimM family. As to quaternary structure, binds ribosomal protein uS19.

Its subcellular location is the cytoplasm. Functionally, an accessory protein needed during the final step in the assembly of 30S ribosomal subunit, possibly for assembly of the head region. Essential for efficient processing of 16S rRNA. May be needed both before and after RbfA during the maturation of 16S rRNA. It has affinity for free ribosomal 30S subunits but not for 70S ribosomes. This chain is Ribosome maturation factor RimM, found in Thermosipho melanesiensis (strain DSM 12029 / CIP 104789 / BI429).